Here is an 83-residue protein sequence, read N- to C-terminus: EMBRYO SURROUNDING FACTOR 1.1 (83 aa).

The N-terminal stretch at 1 to 22 is a signal peptide; sequence MKSSHTSLICILMLSLVALHQC. 4 cysteine pairs are disulfide-bonded: C41–C56, C46–C75, C54–C71, and C57–C64.

The protein belongs to the MEG family. As to expression, expressed exclusively in ovule embryo sacs and in early developing endosperms.

Its function is as follows. Maternally-contributed central cell peptide regulating suspensor development and correct auxin distribution in early developing embryos. In Arabidopsis thaliana (Mouse-ear cress), this protein is EMBRYO SURROUNDING FACTOR 1.1 (ESF1.1).